The primary structure comprises 353 residues: Heat-inducible transcription repressor HrcA (353 aa).

Belongs to the HrcA family.

Negative regulator of class I heat shock genes (grpE-dnaK-dnaJ and groELS operons). Prevents heat-shock induction of these operons. This chain is Heat-inducible transcription repressor HrcA, found in Synechococcus elongatus (strain ATCC 33912 / PCC 7942 / FACHB-805) (Anacystis nidulans R2).